Reading from the N-terminus, the 152-residue chain is MQQYSILVLHGPNLNLLGKREPNIYGSVTLDEINLLLSEEAKNLDVTVTCVQSNHEGILIDTIHQAWGLHQGIIINAGAYTHTSVAIRDALSAVKIPTVEVHLSNIYQRETFRHHSYIAPVAIGQISGFGVGSYRLGLLAIVEYLRKLENNH.

Residue tyrosine 25 is the Proton acceptor of the active site. 3 residues coordinate substrate: asparagine 76, histidine 82, and aspartate 89. The active-site Proton donor is histidine 102. Substrate contacts are provided by residues 103-104 and arginine 113; that span reads LS.

The protein belongs to the type-II 3-dehydroquinase family. In terms of assembly, homododecamer.

It carries out the reaction 3-dehydroquinate = 3-dehydroshikimate + H2O. The protein operates within metabolic intermediate biosynthesis; chorismate biosynthesis; chorismate from D-erythrose 4-phosphate and phosphoenolpyruvate: step 3/7. Functionally, catalyzes a trans-dehydration via an enolate intermediate. This chain is 3-dehydroquinate dehydratase, found in Gloeothece citriformis (strain PCC 7424) (Cyanothece sp. (strain PCC 7424)).